A 430-amino-acid polypeptide reads, in one-letter code: Cell wall protein ECM33 (430 aa).

The signal sequence occupies residues 1 to 19; the sequence is MQFKNALTATAILSASALA. Residues N22, N57, N83, N197, N210, N228, N235, N242, N268, N280, N305, and N329 are each glycosylated (N-linked (GlcNAc...) asparagine). Phosphoserine is present on S340. Residues 362-402 are compositionally biased toward low complexity; the sequence is LSSTSTESSKSSATSSASSSGDASNAQASVSASASSSSSSS. The disordered stretch occupies residues 362–411; the sequence is LSSTSTESSKSSATSSASSSGDASNAQASVSASASSSSSSSKKSKGAAPE. A lipid anchor (GPI-anchor amidated glycine) is attached at G407. Residues 408–430 constitute a propeptide, removed in mature form; the sequence is AAPELVPATSFMGVVAAVAVALL.

It belongs to the SPS2 family. In terms of processing, the GPI-anchor is attached to the protein in the endoplasmic reticulum and serves to target the protein to the cell surface. There, the glucosamine-inositol phospholipid moiety is cleaved off and the GPI-modified mannoprotein is covalently attached via its lipidless GPI glycan remnant to the 1,6-beta-glucan of the outer cell wall layer.

It is found in the cell membrane. Its subcellular location is the secreted. It localises to the cell wall. Its function is as follows. Required for proper cell wall integrity and for the correct assembly of the mannoprotein outer layer of the cell wall. Important for apical bud growth. The chain is Cell wall protein ECM33 (ECM33) from Saccharomyces cerevisiae (strain JAY291) (Baker's yeast).